We begin with the raw amino-acid sequence, 155 residues long: S-ribosylhomocysteine lyase (155 aa).

Residues histidine 57, histidine 61, and cysteine 124 each coordinate Fe cation.

It belongs to the LuxS family. As to quaternary structure, homodimer. The cofactor is Fe cation.

It catalyses the reaction S-(5-deoxy-D-ribos-5-yl)-L-homocysteine = (S)-4,5-dihydroxypentane-2,3-dione + L-homocysteine. In terms of biological role, involved in the synthesis of autoinducer 2 (AI-2) which is secreted by bacteria and is used to communicate both the cell density and the metabolic potential of the environment. The regulation of gene expression in response to changes in cell density is called quorum sensing. Catalyzes the transformation of S-ribosylhomocysteine (RHC) to homocysteine (HC) and 4,5-dihydroxy-2,3-pentadione (DPD). The chain is S-ribosylhomocysteine lyase from Listeria monocytogenes serotype 4a (strain HCC23).